Consider the following 666-residue polypeptide: Non-receptor tyrosine-protein kinase TNK1 (666 aa).

Phosphoserine is present on residues S60 and S96. The region spanning 116–377 (VCRGELLGSG…PSFSHLEGLL (262 aa)) is the Protein kinase domain. ATP contacts are provided by residues 122–130 (LGSGCFGVV) and K148. Catalysis depends on D245, which acts as the Proton acceptor. A phosphoserine mark is found at S255 and S411. In terms of domain architecture, SH3 spans 380-445 (AGPSEACCVR…PASAVTLADA (66 aa)). The tract at residues 446 to 493 (GGLPATRPVHRGTPARGDQHPGSIDGDRKKANLWDAPPARGQRRNMPL) is disordered. S502 bears the Phosphoserine mark. Residues 506–579 (VLSLGPRPTG…MGMPGARKAA (74 aa)) form a disordered region. T514 carries the post-translational modification Phosphothreonine. S519 carries the post-translational modification Phosphoserine. The span at 531 to 541 (QGPPGLPPRPP) shows a compositional bias: pro residues. Low complexity predominate over residues 542–552 (LSSSSPQPSQP). S582 bears the Phosphoserine mark.

Belongs to the protein kinase superfamily. Tyr protein kinase family. In terms of assembly, interacts with the SH3 domain of PLCG1 via its Pro-rich domain. In terms of processing, autophosphorylated on tyrosine residues. As to expression, expressed in all umbilical cord blood, bone marrow and adult blood cell sub-populations and in several leukemia cell lines. Highly expressed in fetal blood, brain, lung, liver and kidney. Detected at lower levels in adult prostate, testis, ovary, small intestine and colon. Not expressed in adult lung, liver, kidney or brain.

The protein resides in the cytoplasm. Its subcellular location is the membrane. The catalysed reaction is L-tyrosyl-[protein] + ATP = O-phospho-L-tyrosyl-[protein] + ADP + H(+). Its function is as follows. Involved in negative regulation of cell growth. Has tumor suppressor properties. Plays a negative regulatory role in the Ras-MAPK pathway. May function in signaling pathways utilized broadly during fetal development and more selectively in adult tissues and in cells of the lymphohematopoietic system. Could specifically be involved in phospholipid signal transduction. The sequence is that of Non-receptor tyrosine-protein kinase TNK1 from Homo sapiens (Human).